Here is a 173-residue protein sequence, read N- to C-terminus: Alpha-crystallin A chain (173 aa).

Methionine 1 carries the N-acetylmethionine modification. The segment at 1–63 (MDVTIQHPWF…RTVLDSGISE (63 aa)) is required for complex formation with BFSP1 and BFSP2. The residue at position 6 (glutamine 6) is a Deamidated glutamine; partial. Serine 45 is subject to Phosphoserine. Deamidated glutamine; partial occurs at positions 50 and 90. The region spanning 52–162 (LFRTVLDSGI…SHSERAIPVS (111 aa)) is the sHSP domain. The residue at position 99 (lysine 99) is an N6-acetyllysine. Histidine 100 provides a ligand contact to Zn(2+). Asparagine 101 carries the post-translational modification Deamidated asparagine; partial. Glutamate 102 and histidine 107 together coordinate Zn(2+). Serine 122 is subject to Phosphoserine. Residue asparagine 123 is modified to Deamidated asparagine; partial. Residues cysteine 131 and cysteine 142 are joined by a disulfide bond. Glutamine 147 bears the Deamidated glutamine; partial mark. A disordered region spans residues 149-173 (GMDASHSERAIPVSREEKPSSAPSS). The span at 153-167 (SHSERAIPVSREEKP) shows a compositional bias: basic and acidic residues. Residue histidine 154 participates in Zn(2+) binding. Serine 162 carries an O-linked (GlcNAc) serine glycan.

The protein belongs to the small heat shock protein (HSP20) family. Heteromer composed of three CRYAA and one CRYAB subunits. Inter-subunit bridging via zinc ions enhances stability, which is crucial as there is no protein turn over in the lens. Can also form homodimers and homotetramers (dimers of dimers) which serve as the building blocks of homooligomers. Within homooligomers, the zinc-binding motif is created from residues of 3 different molecules. His-100 and Glu-102 from one molecule are ligands of the zinc ion, and His-107 and His-154 residues from additional molecules complete the site with tetrahedral coordination geometry. Part of a complex required for lens intermediate filament formation composed of BFSP1, BFSP2 and CRYAA. Post-translationally, undergoes age-dependent proteolytical cleavage at the C-terminus.

Its subcellular location is the cytoplasm. It localises to the nucleus. Contributes to the transparency and refractive index of the lens. In its oxidized form (absence of intramolecular disulfide bond), acts as a chaperone, preventing aggregation of various proteins under a wide range of stress conditions. Required for the correct formation of lens intermediate filaments as part of a complex composed of BFSP1, BFSP2 and CRYAA. The polypeptide is Alpha-crystallin A chain (CRYAA) (Loxodonta africana (African elephant)).